Reading from the N-terminus, the 477-residue chain is Regulatory protein HrpB (477 aa).

Residues 375 to 477 enclose the HTH araC/xylS-type domain; sequence RRAYRYIIEN…NEAPSETIWR (103 aa). 2 consecutive DNA-binding regions (H-T-H motif) follow at residues 393 to 414 and 444 to 467; these read REVA…KSAV and IIDT…RKQF.

In terms of biological role, positive regulation of hypersensitive response genes involved in plant pathogenicity and partly of its own synthesis in minimal medium. In Ralstonia nicotianae (strain ATCC BAA-1114 / GMI1000) (Ralstonia solanacearum), this protein is Regulatory protein HrpB (hrpB).